A 133-amino-acid chain; its full sequence is ATP synthase epsilon chain, chloroplastic (133 aa).

Belongs to the ATPase epsilon chain family. As to quaternary structure, F-type ATPases have 2 components, CF(1) - the catalytic core - and CF(0) - the membrane proton channel. CF(1) has five subunits: alpha(3), beta(3), gamma(1), delta(1), epsilon(1). CF(0) has three main subunits: a, b and c.

The protein resides in the plastid. The protein localises to the chloroplast thylakoid membrane. Its function is as follows. Produces ATP from ADP in the presence of a proton gradient across the membrane. The sequence is that of ATP synthase epsilon chain, chloroplastic from Jasminum nudiflorum (Winter jasmine).